Here is a 448-residue protein sequence, read N- to C-terminus: Probable D-serine dehydratase (448 aa).

The residue at position 119 (Lys-119) is an N6-(pyridoxal phosphate)lysine.

The protein belongs to the serine/threonine dehydratase family. DsdA subfamily. It depends on pyridoxal 5'-phosphate as a cofactor.

It catalyses the reaction D-serine = pyruvate + NH4(+). The sequence is that of Probable D-serine dehydratase from Pseudomonas aeruginosa (strain ATCC 15692 / DSM 22644 / CIP 104116 / JCM 14847 / LMG 12228 / 1C / PRS 101 / PAO1).